A 116-amino-acid chain; its full sequence is Ly-6/neurotoxin-like protein 1 (116 aa).

A signal peptide spans 1-20 (MTHLLTVFLVALMGLPVAQA). In terms of domain architecture, UPAR/Ly6 spans 21-104 (LECHVCAYNG…GFATPVTLAL (84 aa)). 5 disulfides stabilise this stretch: C23–C46, C26–C33, C39–C64, C68–C85, and C86–C91. N92 is lipidated: GPI-anchor amidated asparagine. Positions 93 to 116 (GAGFATPVTLALVPALLATFWSLL) are cleaved as a propeptide — removed in mature form.

As to quaternary structure, interacts with nAChRs containing alpha-4:beta-2 (CHRNA4:CHRNB2) and alpha-7 (CHRNA7) subunits. Interacts with CHRNA4 probably in the endoplasmic reticulum prior to nAChR pentameric assembly. Interacts with KCNA2/Potassium voltage-gated channel subfamily A member 2. As to expression, expressed in neurons of multiple regions in the CNS, including the cerebral cortex, thalamus, substantia nigra, cerebellum, amygdala and hippocampus. Also expressed in kidney, heart and thymus, but at lower levels than in the brain. Expressed in the primary visual cortex (V1) and the lateral geniculate nucleus (at protein level).

The protein localises to the cell membrane. The protein resides in the cell projection. Its subcellular location is the dendrite. It is found in the endoplasmic reticulum. Its function is as follows. Acts in different tissues through interaction to nicotinic acetylcholine receptors (nAChRs). The proposed role as modulator of nAChR activity seems to be dependent on the nAChR subtype and stoichiometry, and to involve an effect on nAChR trafficking and its cell surface expression, and on single channel properties of the nAChR inserted in the plasma membrane. Modulates functional properties of nicotinic acetylcholine receptors (nAChRs) to prevent excessive excitation, and hence neurodegeneration. Enhances desensitization by increasing both the rate and extent of desensitization of alpha-4:beta-2-containing nAChRs and slowing recovery from desensitization. Promotes large amplitude ACh-evoked currents through alpha-4:beta-2 nAChRs. Is involved in regulation of the nAChR pentameric assembly in the endoplasmic reticulum. Shifts stoichiometry from high sensitivity alpha-4(2):beta-2(3) to low sensitivity alpha-4(3):beta-2(2) nAChR. In vitro modulates alpha-3:beta-4-containing nAChRs. Reduces cell surface expression of (alpha-3:beta-4)(2):beta-4 and (alpha-3:beta-4)(2):alpha-5 nAChRs suggesting an interaction with nAChR alpha-3(-):(+)beta-4 subunit interfaces and an allosteric mode. Corresponding single channel effects characterized by decreased unitary conductance, altered burst proportions and enhanced desensitization/inactivation seem to depend on nAChR alpha:alpha subunit interfaces and are greater in (alpha-3:beta-2)(2):alpha-3 when compared to (alpha-3:beta-2)(2):alpha-5 nAChRs. Prevents plasticity in the primary visual cortex late in life. This is Ly-6/neurotoxin-like protein 1 from Mus musculus (Mouse).